Consider the following 295-residue polypeptide: Ribosomal RNA small subunit methyltransferase A (295 aa).

Residues asparagine 33, valine 35, glycine 60, glutamate 81, aspartate 111, and asparagine 129 each coordinate S-adenosyl-L-methionine.

Belongs to the class I-like SAM-binding methyltransferase superfamily. rRNA adenine N(6)-methyltransferase family. RsmA subfamily.

It is found in the cytoplasm. It carries out the reaction adenosine(1518)/adenosine(1519) in 16S rRNA + 4 S-adenosyl-L-methionine = N(6)-dimethyladenosine(1518)/N(6)-dimethyladenosine(1519) in 16S rRNA + 4 S-adenosyl-L-homocysteine + 4 H(+). Specifically dimethylates two adjacent adenosines (A1518 and A1519) in the loop of a conserved hairpin near the 3'-end of 16S rRNA in the 30S particle. May play a critical role in biogenesis of 30S subunits. The chain is Ribosomal RNA small subunit methyltransferase A from Streptomyces avermitilis (strain ATCC 31267 / DSM 46492 / JCM 5070 / NBRC 14893 / NCIMB 12804 / NRRL 8165 / MA-4680).